The primary structure comprises 95 residues: Integration host factor subunit beta (95 aa).

The tract at residues 57 to 76 (APRTGRNPKTGDKVDLEGKY) is disordered. Residues 65–76 (KTGDKVDLEGKY) show a composition bias toward basic and acidic residues.

The protein belongs to the bacterial histone-like protein family. Heterodimer of an alpha and a beta chain.

In terms of biological role, this protein is one of the two subunits of integration host factor, a specific DNA-binding protein that functions in genetic recombination as well as in transcriptional and translational control. In Enterobacter sp. (strain 638), this protein is Integration host factor subunit beta.